The primary structure comprises 593 residues: Meiotic recombination protein REC8 homolog (593 aa).

A Phosphoserine modification is found at serine 149. A Phosphothreonine modification is found at threonine 164. Phosphoserine is present on serine 192. Disordered stretches follow at residues 247 to 282 (QRRA…AQVE), 317 to 344 (ELRL…RRGR), and 422 to 444 (PQLE…RRKT). Positions 255 to 265 (DESKEEPRALE) are enriched in basic and acidic residues. A compositionally biased stretch (basic and acidic residues) spans 432–444 (EERVADKEERRKT).

Belongs to the rad21 family. In terms of assembly, interacts (phosphorylated and unphosphorylated form) with SMC3. Interacts with SYCP3. Interacts (phosphorylated and unphosphorylated form) with SMC1B. Does not interact with SMC1A. Interacts with RAD51. Forms a complex with EWSR1, PRDM9, SYCP3 and SYCP1; complex formation is dependent of phosphorylated form of REC8 and requires PRDM9 bound to hotspot DNA; EWSR1 joins PRDM9 with the chromosomal axis through REC8. In terms of processing, phosphorylated.

The protein resides in the nucleus. It localises to the chromosome. It is found in the centromere. Required during meiosis for separation of sister chromatids and homologous chromosomes. Proteolytic cleavage of REC8 on chromosome arms by separin during anaphase I allows for homologous chromosome separation in meiosis I and cleavage of REC8 on centromeres during anaphase II allows for sister chromatid separation in meiosis II. In Rattus norvegicus (Rat), this protein is Meiotic recombination protein REC8 homolog.